A 285-amino-acid chain; its full sequence is MASLREIQMRITSTQSTKQITKAMNMVSASKLNRAQGNNANFKPYMDKLQEVISSIAGGTSGATHPMLQVRPVKRTGYIVITSDRGLAGGYNASVLRDVYRELKDKHTSTDEYRLYVIGKVGVQFFKSRNIPVYSAMTGLNDQPTFVEVAEIVKQTVGAFSEGEIDELKLCYNSFISVISQEVKIQQLLPLGDIEQSASNVMYEYEPEEETILAALLPRYAEGLIYGALLDAKVSEHAARMTAMSSATDNADELIRGLKLKFNRARQAAITQEITEIVGGASALE.

The protein belongs to the ATPase gamma chain family. F-type ATPases have 2 components, CF(1) - the catalytic core - and CF(0) - the membrane proton channel. CF(1) has five subunits: alpha(3), beta(3), gamma(1), delta(1), epsilon(1). CF(0) has three main subunits: a, b and c.

The protein resides in the cell membrane. In terms of biological role, produces ATP from ADP in the presence of a proton gradient across the membrane. The gamma chain is believed to be important in regulating ATPase activity and the flow of protons through the CF(0) complex. This Exiguobacterium sp. (strain ATCC BAA-1283 / AT1b) protein is ATP synthase gamma chain.